The chain runs to 514 residues: 2,3-bisphosphoglycerate-independent phosphoglycerate mutase (514 aa).

Positions 14 and 64 each coordinate Mn(2+). Serine 64 (phosphoserine intermediate) is an active-site residue. Substrate contacts are provided by residues histidine 125, 155 to 156 (RD), arginine 187, arginine 193, 263 to 266 (RADR), and lysine 336. Residues aspartate 403, histidine 407, aspartate 444, histidine 445, and histidine 463 each contribute to the Mn(2+) site.

It belongs to the BPG-independent phosphoglycerate mutase family. Monomer. It depends on Mn(2+) as a cofactor.

It carries out the reaction (2R)-2-phosphoglycerate = (2R)-3-phosphoglycerate. It participates in carbohydrate degradation; glycolysis; pyruvate from D-glyceraldehyde 3-phosphate: step 3/5. Catalyzes the interconversion of 2-phosphoglycerate and 3-phosphoglycerate. The protein is 2,3-bisphosphoglycerate-independent phosphoglycerate mutase of Shewanella baltica (strain OS195).